The following is a 129-amino-acid chain: Small ribosomal subunit protein uS8 (129 aa).

The protein belongs to the universal ribosomal protein uS8 family. In terms of assembly, part of the 30S ribosomal subunit.

Its function is as follows. One of the primary rRNA binding proteins, it binds directly to 16S rRNA central domain where it helps coordinate assembly of the platform of the 30S subunit. The polypeptide is Small ribosomal subunit protein uS8 (Archaeoglobus fulgidus (strain ATCC 49558 / DSM 4304 / JCM 9628 / NBRC 100126 / VC-16)).